Here is a 118-residue protein sequence, read N- to C-terminus: Large ribosomal subunit protein bL20 (118 aa).

The protein belongs to the bacterial ribosomal protein bL20 family.

Its function is as follows. Binds directly to 23S ribosomal RNA and is necessary for the in vitro assembly process of the 50S ribosomal subunit. It is not involved in the protein synthesizing functions of that subunit. In Phenylobacterium zucineum (strain HLK1), this protein is Large ribosomal subunit protein bL20.